A 212-amino-acid chain; its full sequence is MSLGLVGRKVGMTRIFAEDGASIPVTVLDVSNNRVTQVKTPEIDGYAAIQVAFGKRRASRVSKPLAGHLAKAGVEAGHVLKEFQIEADQLASFKAGDQVAVTIFAEGQKVDVTGTSIGKGFQGGIKRHNFSSNRASHGNSLSHNAPGSIGMAQDPGRVFPGKRMAGHLGDVQSTMQGLTIVRVDADRQLLLVKGAVPGAKGSDVVVRPAVKA.

Gln153 is modified (N5-methylglutamine).

It belongs to the universal ribosomal protein uL3 family. In terms of assembly, part of the 50S ribosomal subunit. Forms a cluster with proteins L14 and L19. Methylated by PrmB.

In terms of biological role, one of the primary rRNA binding proteins, it binds directly near the 3'-end of the 23S rRNA, where it nucleates assembly of the 50S subunit. This chain is Large ribosomal subunit protein uL3, found in Dechloromonas aromatica (strain RCB).